The following is a 64-amino-acid chain: Large ribosomal subunit protein uL30 (64 aa).

Positions 1–22 (MAKAAKTIKVEQTGSAIRRHHS) are disordered.

This sequence belongs to the universal ribosomal protein uL30 family. As to quaternary structure, part of the 50S ribosomal subunit.

The polypeptide is Large ribosomal subunit protein uL30 (Nitrobacter winogradskyi (strain ATCC 25391 / DSM 10237 / CIP 104748 / NCIMB 11846 / Nb-255)).